A 490-amino-acid chain; its full sequence is Cytochrome P450 monooxygenase aclL (490 aa).

A helical transmembrane segment spans residues 1 to 21 (MLFSLGPLTIVYGLVIFVVAK). Residue asparagine 176 is glycosylated (N-linked (GlcNAc...) asparagine). Residue cysteine 434 participates in heme binding.

It belongs to the cytochrome P450 family. Requires heme as cofactor.

Its subcellular location is the membrane. It participates in mycotoxin biosynthesis. Its function is as follows. Cytochrome P450 monooxygenase; part of the gene cluster that mediates the biosynthesis of aspirochlorine (or antibiotic A30641), an unusual halogenated spiro compound with distinctive antifungal properties due to selective inhibition of protein biosynthesis, and which is also active against bacteria, viruses, and murine tumor cells. The non-ribosomal peptide synthetase (NRPS) aclP is responsible the formation of the diketopiperazine (DKP) core from the condensation of 2 phenylalanine residues. One Phe residue is tailored into chlorotyrosine by hydroxylation and chlorination, whereas the second Phe undergoes an unprecedented C-C bond cleavage to be converted into glycine. After formation of the DKP, sulfur is incorporated into the DKP by conjugation with glutathione by aclG, followed by its stepwise degradation to the thiol by aclI, aclJ and aclK, and the dithiol oxidation by aclT. In addition, oxygenases (aclB, aclC, aclL and aclO) and O-methyltransferases (aclM and aclU) act as tailoring enzymes to produce the intermediate dechloroaspirochlorine. Ultimately, chlorination of dechloroaspirochlorine by the halogenase aclH is the last step in the aspirochlorine pathway. This is Cytochrome P450 monooxygenase aclL from Aspergillus oryzae (strain ATCC 42149 / RIB 40) (Yellow koji mold).